A 1939-amino-acid polypeptide reads, in one-letter code: Myosin-6 (1939 aa).

One can recognise a Myosin N-terminal SH3-like domain in the interval 32–81 (DIRTECFVPDDKEEFVKAKIVSREGGKVTAETENGKTVTVKEDQVMQQNP). The 696-residue stretch at 85–780 (DKIEDMAMLT…LLGLLEEMRD (696 aa)) folds into the Myosin motor domain. The residue at position 129 (Lys129) is an N6,N6,N6-trimethyllysine. 178–185 (GESGAGKT) serves as a coordination point for ATP. Position 379 is a phosphothreonine (Thr379). Ser417 bears the Phosphoserine mark. 2 actin-binding regions span residues 657–679 (LNKL…IPNE) and 759–773 (KFGH…GLLG). In terms of domain architecture, IQ spans 783 to 812 (LSRIITRIQAQARGQLMRIEFKKMVERRDA). Positions 842 to 1939 (LKSAETEKEM…GAKQKMHDEE (1098 aa)) form a coiled coil. Ser1090 and Ser1139 each carry phosphoserine. Tyr1261 carries the phosphotyrosine modification. The residue at position 1271 (Ser1271) is a Phosphoserine. Phosphothreonine is present on residues Thr1277 and Thr1284. Phosphoserine is present on Ser1309. Tyr1310 carries the post-translational modification Phosphotyrosine. Thr1311 carries the post-translational modification Phosphothreonine. The residue at position 1512 (Ser1512) is a Phosphoserine. 2 positions are modified to phosphothreonine: Thr1515 and Thr1681. Positions 1908-1939 (AEERADIAESQVNKLRAKSRDIGAKQKMHDEE) are disordered. The segment covering 1925–1939 (KSRDIGAKQKMHDEE) has biased composition (basic and acidic residues).

This sequence belongs to the TRAFAC class myosin-kinesin ATPase superfamily. Myosin family. Muscle myosin is a hexameric protein that consists of 2 heavy chain subunits (MHC), 2 alkali light chain subunits (MLC) and 2 regulatory light chain subunits (MLC-2).

The protein resides in the cytoplasm. The protein localises to the myofibril. Muscle contraction. This is Myosin-6 (MYH6) from Mesocricetus auratus (Golden hamster).